A 1435-amino-acid polypeptide reads, in one-letter code: DNA polymerase III PolC-type (1435 aa).

The Exonuclease domain maps to 404-562 (YVVYDIETTG…YDSSVLTNIF (159 aa)).

It belongs to the DNA polymerase type-C family. PolC subfamily.

It is found in the cytoplasm. It carries out the reaction DNA(n) + a 2'-deoxyribonucleoside 5'-triphosphate = DNA(n+1) + diphosphate. Required for replicative DNA synthesis. This DNA polymerase also exhibits 3' to 5' exonuclease activity. This is DNA polymerase III PolC-type from Mycoplasmopsis pulmonis (strain UAB CTIP) (Mycoplasma pulmonis).